Consider the following 223-residue polypeptide: UPF0441 protein YgiB (223 aa).

The segment covering 178 to 195 (TVPKTAMAPKPATTTTVT) has biased composition (low complexity). A disordered region spans residues 178–223 (TVPKTAMAPKPATTTTVTRGGFGESVAKQSTLQRSATGTSSRSMGG). The span at 204–223 (AKQSTLQRSATGTSSRSMGG) shows a compositional bias: polar residues.

It belongs to the UPF0441 family.

The sequence is that of UPF0441 protein YgiB from Escherichia coli (strain ATCC 8739 / DSM 1576 / NBRC 3972 / NCIMB 8545 / WDCM 00012 / Crooks).